Consider the following 230-residue polypeptide: 5'-methylthioadenosine/S-adenosylhomocysteine nucleosidase (230 aa).

Glu12 serves as the catalytic Proton acceptor. Residues Gly78, Ile153, and 174 to 175 contribute to the substrate site; that span reads ME. The active-site Proton donor is Asp198.

Belongs to the PNP/UDP phosphorylase family. MtnN subfamily.

The enzyme catalyses S-adenosyl-L-homocysteine + H2O = S-(5-deoxy-D-ribos-5-yl)-L-homocysteine + adenine. The catalysed reaction is S-methyl-5'-thioadenosine + H2O = 5-(methylsulfanyl)-D-ribose + adenine. It catalyses the reaction 5'-deoxyadenosine + H2O = 5-deoxy-D-ribose + adenine. The protein operates within amino-acid biosynthesis; L-methionine biosynthesis via salvage pathway; S-methyl-5-thio-alpha-D-ribose 1-phosphate from S-methyl-5'-thioadenosine (hydrolase route): step 1/2. Functionally, catalyzes the irreversible cleavage of the glycosidic bond in both 5'-methylthioadenosine (MTA) and S-adenosylhomocysteine (SAH/AdoHcy) to adenine and the corresponding thioribose, 5'-methylthioribose and S-ribosylhomocysteine, respectively. Also cleaves 5'-deoxyadenosine, a toxic by-product of radical S-adenosylmethionine (SAM) enzymes, into 5-deoxyribose and adenine. The chain is 5'-methylthioadenosine/S-adenosylhomocysteine nucleosidase from Shewanella loihica (strain ATCC BAA-1088 / PV-4).